The primary structure comprises 141 residues: AsCystatin (141 aa).

An N-terminal signal peptide occupies residues 1–26; it reads MVHSQLPVAAPLRLLCALLLLPLATM. A Cystatin domain is found at 29–129; the sequence is GGLSPRSVTD…CRFQVWSCPW (101 aa). The short motif at 73–77 is the Secondary area of contact element; sequence QVVTG. 2 disulfides stabilise this stretch: C91-C107 and C120-C140.

The protein belongs to the cystatin family. As to expression, expressed at a low level by the venom gland (at protein level).

It localises to the secreted. Its function is as follows. Recombinant AsCystatin inhibits various C1 cysteine proteases including cathepsin L (Ki is 0.89 pM), papain (Ki is 1.74 pM) and cathepsin B (Ki is 0.69 nM). This activity has also been observed in the crude venom. This protein has no toxic activity and its function in the venom is unknown. It may play a role as a housekeeping or regulatory protein. The chain is AsCystatin from Austrelaps superbus (Lowland copperhead snake).